A 156-amino-acid chain; its full sequence is Small ribosomal subunit protein uS7 (156 aa).

Belongs to the universal ribosomal protein uS7 family. As to quaternary structure, part of the 30S ribosomal subunit. Contacts proteins S9 and S11.

Its function is as follows. One of the primary rRNA binding proteins, it binds directly to 16S rRNA where it nucleates assembly of the head domain of the 30S subunit. Is located at the subunit interface close to the decoding center, probably blocks exit of the E-site tRNA. The protein is Small ribosomal subunit protein uS7 of Mycoplasmopsis synoviae (strain 53) (Mycoplasma synoviae).